A 79-amino-acid chain; its full sequence is Conotoxin Vi6.3 (79 aa).

The signal sequence occupies residues 1 to 22; the sequence is MKLTCVLIITVLFLTASQLITA. A propeptide spanning residues 23–47 is cleaved from the precursor; sequence DYSRDQRQYRAVRLGDEMRNFKGAR. Intrachain disulfides connect Cys-49/Cys-62, Cys-56/Cys-67, and Cys-61/Cys-77. 2 positions are modified to 4-hydroxyproline: Pro-60 and Pro-63.

The protein belongs to the conotoxin O1 superfamily. Expressed by the venom duct.

The protein localises to the secreted. In terms of biological role, ion channel inhibitor that inhibits the increase in intracellular calcium upon depolarization in DRG neurons. In vivo, both intraperitoneal and intracranial injections into mice induce hyperactivity. The polypeptide is Conotoxin Vi6.3 (Conus virgo (Virgin cone)).